A 513-amino-acid chain; its full sequence is Ribonuclease Y (513 aa).

A helical membrane pass occupies residues 3–23 (IGTLLLFTFLGLVAGATAVWL). Residues 77–96 (LQSVESKLKSREQTLNQRQE) are disordered. Positions 82 to 96 (SKLKSREQTLNQRQE) are enriched in basic and acidic residues. Residues 203–263 (SVTVFHIESD…VRREIARLAL (61 aa)) enclose the KH domain. Residues 329–422 (LLQHSRETAN…VQVCDAISGA (94 aa)) enclose the HD domain.

Belongs to the RNase Y family.

It is found in the cell membrane. Endoribonuclease that initiates mRNA decay. This is Ribonuclease Y from Porphyromonas gingivalis (strain ATCC BAA-308 / W83).